The sequence spans 336 residues: MSYSEKTTVDPLLRDLDEKKESFRRNVVSLATELKQVRGRLVSQEQSFLKETITRKEAEKRGKNMEMEICKLQKRLEERNCQLEASASAADKFIKELEEFRLKLDTTKQTAEASADSAQSTKIQCSMLKQQLDDKTRSLREQEDRMTQLGHQLDDLQRGLSLRECSEKQLREEVRRIEREVTEAIAKAGIGGMDSELQKLLEDVSPMKFERMNRLVEVKDEEITKLKDEIRLMSGQWKHKTKELESQLEKQRRTDQDLKKKVLKLEFCLQEARSQTRKLQRKGERRDMEIKEIRDLISEKQNLNNESWDKQKFWDNSGFKIVVSMSMLMLVVVSKR.

Positions 125 to 261 (CSMLKQQLDD…RRTDQDLKKK (137 aa)) form a coiled coil. Positions 240-261 (KTKELESQLEKQRRTDQDLKKK) match the Bipartite nuclear localization signal motif. Residues 313-330 (FWDNSGFKIVVSMSMLML) form a helical membrane-spanning segment.

In terms of assembly, forms heteromers with NEAP2 and NEAP3. Interacts with SUN1; SUN2 and bZIP18.

Its subcellular location is the nucleus inner membrane. It is found in the nucleus. The protein localises to the nucleoplasm. This is Nuclear envelope-associated protein 1 from Arabidopsis thaliana (Mouse-ear cress).